Here is a 160-residue protein sequence, read N- to C-terminus: Nucleotide-binding protein Tola_0795 (160 aa).

This sequence belongs to the YajQ family.

Its function is as follows. Nucleotide-binding protein. This chain is Nucleotide-binding protein Tola_0795, found in Tolumonas auensis (strain DSM 9187 / NBRC 110442 / TA 4).